A 328-amino-acid polypeptide reads, in one-letter code: ATP-dependent 6-phosphofructokinase (328 aa).

Glycine 11 is an ATP binding site. 21-25 serves as a coordination point for ADP; the sequence is RAAVR. ATP is bound by residues 72–73 and 102–105; these read RS and GNGT. Asparagine 103 serves as a coordination point for Mg(2+). 126–128 contributes to the substrate binding site; it reads TID. The active-site Proton acceptor is the aspartate 128. Arginine 155 provides a ligand contact to ADP. Residues arginine 163 and 170 to 172 each bind substrate; that span reads MGR. ADP contacts are provided by residues 186 to 188 and 214 to 216; these read GAE and KAS. Residues glutamate 223, arginine 247, and 253-256 contribute to the substrate site; that span reads HVQR.

The protein belongs to the phosphofructokinase type A (PFKA) family. ATP-dependent PFK group I subfamily. Prokaryotic clade 'B1' sub-subfamily. Homotetramer. Mg(2+) serves as cofactor.

The protein localises to the cytoplasm. It catalyses the reaction beta-D-fructose 6-phosphate + ATP = beta-D-fructose 1,6-bisphosphate + ADP + H(+). It participates in carbohydrate degradation; glycolysis; D-glyceraldehyde 3-phosphate and glycerone phosphate from D-glucose: step 3/4. Its activity is regulated as follows. Allosterically activated by ADP and other diphosphonucleosides, and allosterically inhibited by phosphoenolpyruvate. Functionally, catalyzes the phosphorylation of D-fructose 6-phosphate to fructose 1,6-bisphosphate by ATP, the first committing step of glycolysis. The protein is ATP-dependent 6-phosphofructokinase of Cytophaga hutchinsonii (strain ATCC 33406 / DSM 1761 / CIP 103989 / NBRC 15051 / NCIMB 9469 / D465).